The following is a 1798-amino-acid chain: Non-reducing polyketide synthase nscA (1798 aa).

The interval 25–256 is N-terminal acylcarrier protein transacylase domain (SAT); it reads RRLDQHSKDR…PLPVYDGLCH (232 aa). One can recognise a Ketosynthase family 3 (KS3) domain in the interval 392-825; that stretch reads SSKLAIVGMA…GGNTTLLLED (434 aa). A disordered region spans residues 436-455; the sequence is NTHYDPTGKTENTTQTPYGN. The segment covering 444–453 has biased composition (polar residues); that stretch reads KTENTTQTPY. Active-site for beta-ketoacyl synthase activity residues include Cys-565, His-700, and His-743. The malonyl-CoA:ACP transacylase (MAT) domain stretch occupies residues 931 to 1230; it reads FTGQGAYYHG…PSASAMSSCR (300 aa). The tract at residues 1322-1458 is N-terminal hotdog fold; it reads HQITAETVEA…AMIRFEDPVA (137 aa). A PKS/mFAS DH domain is found at 1322–1632; it reads HQITAETVEA…FRRVPRLLMD (311 aa). Residue His-1354 is the Proton acceptor; for dehydratase activity of the active site. The tract at residues 1390–1628 is product template (PT) domain; the sequence is HMNLTDVEVL…GMIRFRRVPR (239 aa). Residues 1486-1632 form a C-terminal hotdog fold region; the sequence is ASRLSKPLAY…FRRVPRLLMD (147 aa). Catalysis depends on Asp-1543, which acts as the Proton donor; for dehydratase activity. The interval 1685 to 1719 is disordered; it reads MASKAPEPAPLLATSSESSTPKESPIVTPAESERA. A compositionally biased stretch (low complexity) spans 1698-1709; the sequence is TSSESSTPKESP. Residues 1721-1798 enclose the Carrier domain; that stretch reads PVDNNMISQC…EMTAWIEEYC (78 aa). An O-(pantetheine 4'-phosphoryl)serine modification is found at Ser-1758.

Pantetheine 4'-phosphate serves as cofactor.

Its pathway is secondary metabolite biosynthesis. In terms of biological role, non-reducing polyketide synthase; part of the gene cluster that mediates the biosynthesis of neosartoricin B, a prenylated anthracenone that probably exhibits T-cell antiproliferative activity, suggestive of a physiological role as an immunosuppressive agent. The non-reducing polyketide synthase nscA probably synthesizes and cyclizes the decaketide backbone. The hydrolase nscB then mediates the product release through hydrolysis followed by spontaneous decarboxylation. The prenyltransferase nscD catalyzes the addition of the dimethylallyl group to the aromatic C5. The FAD-dependent monooxygenase nscC is then responsible for the stereospecific hydroxylation at C2. Neosartoricin B can be converted into two additional compounds neosartoricins C and D. Neosartoricin C is a spirocyclic compound that is cyclized through the attack of C3 hydroxyl on C14, followed by dehydration. On the other hand, neosartoricin D is a further cyclized compound in which attack of C2 on C14 in neosartoricin C results in the formation of the acetal-containing dioxabicyclo-octanone ring. Both of these compounds are novel and possibly represent related metabolites of the gene cluster. The chain is Non-reducing polyketide synthase nscA from Arthroderma benhamiae (strain ATCC MYA-4681 / CBS 112371) (Trichophyton mentagrophytes).